Reading from the N-terminus, the 483-residue chain is Triplex capsid protein 1 (483 aa).

The short motif at 24–40 is the RIP homotypic interaction motif (RHIM) element; sequence LLGNNRFIQIGNGLHMT.

The protein belongs to the herpesviridae TRX1 protein family. Interacts with TRX2, MCP and capsid vertex component 2/CVC2. Self-assembles into homo-oligomeric amyloid fibrils. Interacts with host ZBP1; this interaction prevents host necroptosis and extrinsic apoptosis. Interacts with host RIPK3.

The protein localises to the virion. It localises to the host nucleus. Its function is as follows. Structural component of the T=16 icosahedral capsid. The capsid is composed of pentamers and hexamers of major capsid protein/MCP, which are linked together by heterotrimers called triplexes. These triplexes are formed by a single molecule of triplex protein 1/TRX1 and two copies of triplex protein 2/TRX2. Additionally, TRX1 is required for efficient transport of TRX2 to the nucleus, which is the site of capsid assembly. Also prevents necroptosis and extrinsic apoptosis by sequestering host ZBP1 into large, insoluble supercomplexes and impairing its ability to interact with RIPK3. The sequence is that of Triplex capsid protein 1 from Varicella-zoster virus (strain Dumas) (HHV-3).